A 124-amino-acid chain; its full sequence is Large ribosomal subunit protein bL12 (124 aa).

The protein belongs to the bacterial ribosomal protein bL12 family. Homodimer. Part of the ribosomal stalk of the 50S ribosomal subunit. Forms a multimeric L10(L12)X complex, where L10 forms an elongated spine to which 2 to 4 L12 dimers bind in a sequential fashion. Binds GTP-bound translation factors.

Functionally, forms part of the ribosomal stalk which helps the ribosome interact with GTP-bound translation factors. Is thus essential for accurate translation. This chain is Large ribosomal subunit protein bL12, found in Burkholderia mallei (strain NCTC 10247).